We begin with the raw amino-acid sequence, 196 residues long: Shikimate kinase (196 aa).

Residue 21–26 (GTGKSR) coordinates ATP. Ser-25 is a binding site for Mg(2+). Positions 43, 67, and 89 each coordinate substrate. Arg-126 contributes to the ATP binding site. Position 145 (Arg-145) interacts with substrate. Arg-161 is an ATP binding site.

It belongs to the shikimate kinase family. In terms of assembly, monomer. Mg(2+) serves as cofactor.

It is found in the cytoplasm. It catalyses the reaction shikimate + ATP = 3-phosphoshikimate + ADP + H(+). Its pathway is metabolic intermediate biosynthesis; chorismate biosynthesis; chorismate from D-erythrose 4-phosphate and phosphoenolpyruvate: step 5/7. Catalyzes the specific phosphorylation of the 3-hydroxyl group of shikimic acid using ATP as a cosubstrate. In Deinococcus radiodurans (strain ATCC 13939 / DSM 20539 / JCM 16871 / CCUG 27074 / LMG 4051 / NBRC 15346 / NCIMB 9279 / VKM B-1422 / R1), this protein is Shikimate kinase.